Consider the following 244-residue polypeptide: 2,5-diamino-6-ribosylamino-4(3H)-pyrimidinone 5'-phosphate reductase (244 aa).

Residues threonine 74, aspartate 78, isoleucine 160, and 183 to 187 each bind NADP(+); that span reads GSHVI.

This sequence belongs to the HTP reductase family. As to quaternary structure, homodimer.

The enzyme catalyses 2,5-diamino-6-(1-D-ribitylamino)pyrimidin-4(3H)-one 5'-phosphate + NADP(+) = 2,5-diamino-6-(1-D-ribosylamino)pyrimidin-4(3H)-one 5'-phosphate + NADPH + H(+). It carries out the reaction 2,5-diamino-6-(1-D-ribitylamino)pyrimidin-4(3H)-one 5'-phosphate + NAD(+) = 2,5-diamino-6-(1-D-ribosylamino)pyrimidin-4(3H)-one 5'-phosphate + NADH + H(+). The protein operates within cofactor biosynthesis; riboflavin biosynthesis. Its function is as follows. Catalyzes an early step in riboflavin biosynthesis, the NADPH-dependent reduction of the ribose side chain of 2,5-diamino-6-ribosylamino-4(3H)-pyrimidinone 5'-phosphate, yielding 2,5-diamino-6-ribitylamino-4(3H)-pyrimidinone 5'-phosphate. The chain is 2,5-diamino-6-ribosylamino-4(3H)-pyrimidinone 5'-phosphate reductase (RIB7) from Candida glabrata (strain ATCC 2001 / BCRC 20586 / JCM 3761 / NBRC 0622 / NRRL Y-65 / CBS 138) (Yeast).